A 117-amino-acid chain; its full sequence is uncharacterized protein (117 aa).

This is an uncharacterized protein from Schizosaccharomyces pombe (strain 972 / ATCC 24843) (Fission yeast).